A 660-amino-acid chain; its full sequence is DNA mismatch repair protein MutL (660 aa).

This sequence belongs to the DNA mismatch repair MutL/HexB family.

This protein is involved in the repair of mismatches in DNA. It is required for dam-dependent methyl-directed DNA mismatch repair. May act as a 'molecular matchmaker', a protein that promotes the formation of a stable complex between two or more DNA-binding proteins in an ATP-dependent manner without itself being part of a final effector complex. The sequence is that of DNA mismatch repair protein MutL from Streptococcus pyogenes serotype M3 (strain ATCC BAA-595 / MGAS315).